The primary structure comprises 202 residues: Probable ATP-dependent Clp protease proteolytic subunit 3 (202 aa).

S101 functions as the Nucleophile in the catalytic mechanism. H126 is an active-site residue.

The protein belongs to the peptidase S14 family. In terms of assembly, fourteen ClpP subunits assemble into 2 heptameric rings which stack back to back to give a disk-like structure with a central cavity, resembling the structure of eukaryotic proteasomes.

Its subcellular location is the cytoplasm. It carries out the reaction Hydrolysis of proteins to small peptides in the presence of ATP and magnesium. alpha-casein is the usual test substrate. In the absence of ATP, only oligopeptides shorter than five residues are hydrolyzed (such as succinyl-Leu-Tyr-|-NHMec, and Leu-Tyr-Leu-|-Tyr-Trp, in which cleavage of the -Tyr-|-Leu- and -Tyr-|-Trp bonds also occurs).. Functionally, cleaves peptides in various proteins in a process that requires ATP hydrolysis. Has a chymotrypsin-like activity. Plays a major role in the degradation of misfolded proteins. The protein is Probable ATP-dependent Clp protease proteolytic subunit 3 of Synechocystis sp. (strain ATCC 27184 / PCC 6803 / Kazusa).